A 208-amino-acid polypeptide reads, in one-letter code: NAD(P)H-quinone oxidoreductase subunit I (208 aa).

4Fe-4S ferredoxin-type domains lie at Gly55 to Val84 and Arg95 to Glu124. 8 residues coordinate [4Fe-4S] cluster: Cys64, Cys67, Cys70, Cys74, Cys104, Cys107, Cys110, and Cys114.

The protein belongs to the complex I 23 kDa subunit family. In terms of assembly, NDH-1 is composed of at least 11 different subunits. [4Fe-4S] cluster serves as cofactor.

It localises to the cellular thylakoid membrane. The catalysed reaction is a plastoquinone + NADH + (n+1) H(+)(in) = a plastoquinol + NAD(+) + n H(+)(out). It carries out the reaction a plastoquinone + NADPH + (n+1) H(+)(in) = a plastoquinol + NADP(+) + n H(+)(out). NDH-1 shuttles electrons from an unknown electron donor, via FMN and iron-sulfur (Fe-S) centers, to quinones in the respiratory and/or the photosynthetic chain. The immediate electron acceptor for the enzyme in this species is believed to be plastoquinone. Couples the redox reaction to proton translocation, and thus conserves the redox energy in a proton gradient. This chain is NAD(P)H-quinone oxidoreductase subunit I, found in Prochlorococcus marinus (strain MIT 9301).